Here is a 408-residue protein sequence, read N- to C-terminus: tRNA(Met) cytidine acetate ligase (408 aa).

Residues 7–20 (IVEY…HKYH), glycine 102, asparagine 170, and 195–196 (RI) contribute to the ATP site.

Belongs to the TmcAL family.

The protein resides in the cytoplasm. The catalysed reaction is cytidine(34) in elongator tRNA(Met) + acetate + ATP = N(4)-acetylcytidine(34) in elongator tRNA(Met) + AMP + diphosphate. Its function is as follows. Catalyzes the formation of N(4)-acetylcytidine (ac(4)C) at the wobble position of elongator tRNA(Met), using acetate and ATP as substrates. First activates an acetate ion to form acetyladenylate (Ac-AMP) and then transfers the acetyl group to tRNA to form ac(4)C34. The chain is tRNA(Met) cytidine acetate ligase from Clostridium kluyveri (strain NBRC 12016).